The primary structure comprises 683 residues: Long-chain-fatty-acid--CoA ligase 5 (683 aa).

Residues 12-32 traverse the membrane as a helical; Signal-anchor for type III membrane protein segment; it reads LPTPALICLLTFGTAIFLWLI. Residues 33-683 lie on the Cytoplasmic side of the membrane; it reads NRPQPVLPLI…IKSLYESIEE (651 aa). At K361 the chain carries N6-acetyllysine.

It belongs to the ATP-dependent AMP-binding enzyme family.

Its subcellular location is the mitochondrion. The protein localises to the endoplasmic reticulum. The protein resides in the mitochondrion outer membrane. It is found in the endoplasmic reticulum membrane. It localises to the cell membrane. The enzyme catalyses a long-chain fatty acid + ATP + CoA = a long-chain fatty acyl-CoA + AMP + diphosphate. It catalyses the reaction (5Z,8Z,11Z,14Z)-eicosatetraenoate + ATP + CoA = (5Z,8Z,11Z,14Z)-eicosatetraenoyl-CoA + AMP + diphosphate. The catalysed reaction is hexadecanoate + ATP + CoA = hexadecanoyl-CoA + AMP + diphosphate. It carries out the reaction (E)-hexadec-2-enoate + ATP + CoA = (2E)-hexadecenoyl-CoA + AMP + diphosphate. The enzyme catalyses 15-hydroxy-(5Z,8Z,11Z,13E)-eicosatetraenoate + ATP + CoA = 15-hydroxy-(5Z,8Z,11Z,13E)-eicosatetraenoyl-CoA + AMP + diphosphate. It catalyses the reaction 12-hydroxy-(5Z,8Z,10E,14Z)-eicosatetraenoate + ATP + CoA = 12-hydroxy-(5Z,8Z,10E,14Z)-eicosatetraenoyl-CoA + AMP + diphosphate. The catalysed reaction is 5-hydroxy-(6E,8Z,11Z,14Z)-eicosatetraenoate + ATP + CoA = 5-hydroxy-(6E,8Z,11Z,14Z)-eicosatetraenoyl-CoA + AMP + diphosphate. It carries out the reaction 14,15-epoxy-(5Z,8Z,11Z)-eicosatrienoate + ATP + CoA = 14,15-epoxy-(5Z,8Z,11Z)-eicosatrienoyl-CoA + AMP + diphosphate. The enzyme catalyses 11,12-epoxy-(5Z,8Z,14Z)-eicosatrienoate + ATP + CoA = 11,12-epoxy-(5Z,8Z,14Z)-eicosatrienoyl-CoA + AMP + diphosphate. It catalyses the reaction (9Z)-octadecenoate + ATP + CoA = (9Z)-octadecenoyl-CoA + AMP + diphosphate. In terms of biological role, catalyzes the conversion of long-chain fatty acids to their active form acyl-CoAs for both synthesis of cellular lipids, and degradation via beta-oxidation. ACSL5 may activate fatty acids from exogenous sources for the synthesis of triacylglycerol destined for intracellular storage. It was suggested that it may also stimulate fatty acid oxidation. At the villus tip of the crypt-villus axis of the small intestine may sensitize epithelial cells to apoptosis specifically triggered by the death ligand TRAIL. May have a role in the survival of glioma cells. Utilizes a wide range of saturated fatty acids with a preference for C16-C18 unsaturated fatty acids. In Mus musculus (Mouse), this protein is Long-chain-fatty-acid--CoA ligase 5.